Reading from the N-terminus, the 483-residue chain is Matrix metalloproteinase-20 (483 aa).

The N-terminal stretch at 1-22 (MKVLPASGLAVLLVTALKFSAA) is a signal peptide. A propeptide spans 23–107 (APSLFAATPR…PRCGVPDVAN (85 aa)) (activation peptide). Positions 98 to 105 (PRCGVPDV) match the Cysteine switch motif. Position 100 (Cys100) interacts with Zn(2+). The Ca(2+) site is built by Glu164, Ala165, and Asp166. Positions 176 and 178 each coordinate Zn(2+). Residues Asp183, Gly184, Arg186, and Thr188 each coordinate Ca(2+). Position 191 (His191) interacts with Zn(2+). Glu197, Gly198, Gly200, and Asp202 together coordinate Ca(2+). Position 204 (His204) interacts with Zn(2+). Asp206 and Glu209 together coordinate Ca(2+). Zn(2+) is bound at residue His226. Glu227 is an active-site residue. The Zn(2+) site is built by His230 and His236. Hemopexin repeat units lie at residues 293–343 (PDIC…FPQL), 344–389 (MSNV…GFPR), 391–439 (VQRI…FSGV), and 440–483 (NGQI…WIGC). Cys296 and Cys483 are disulfide-bonded.

It belongs to the peptidase M10A family. The cofactor is Zn(2+). Ca(2+) is required as a cofactor. Post-translationally, autoactivates at least at the 107-Asn-|-Tyr-108 site. Expressed specifically in the enamel organ.

The protein resides in the secreted. The protein localises to the extracellular space. Its subcellular location is the extracellular matrix. Degrades amelogenin, the major protein component of the enamel matrix and two of the macromolecules characterizing the cartilage extracellular matrix: aggrecan and the cartilage oligomeric matrix protein (COMP). May play a central role in tooth enamel formation. The chain is Matrix metalloproteinase-20 (MMP20) from Sus scrofa (Pig).